Consider the following 1135-residue polypeptide: MGIWKWLVMASLVWPVLTLRNVYDMKIECPHTVSFGENSVIGYVELPPMPLADTAQLVPESSCSMDNHQSLNTITKYTQVSWRGKADQSQSSQTSFETVSTEVDLKGTCVLKHKMVEESYRSRKSITCYDLSCNSTYCKPTLYMIVPIHACNMMKSCLIALGPYRVQVVYERTYCMTGVLIEGKCFVPDQSVVSIIKHGIFDIASVHIVCFFVAVKGNTYKIFEQVKKSFESTCNDTENKVQGYYICIVGGNSAPIYVPTLDDFRSMEAFTGIFRSPHGEDHDLAGEETATYSIVGPANAKVPHSASSDTLSLIAFSGIPSDSSLSILTSSTEAKHVFSPGLFPKLNHTNCDKGAIPLMWTGMIDLPGYYEAIHPCTVFCVLSGPGASCEAFSEGGIFNITYPMCLVSKQNRFRLTEQQVNFVCQRVDVDIVVYCNGQRKVILTKTLVIGQCIYTITSLFSLLPGVAHSIAVELCVPGFHGWATAALLVTFCFGWVLIPAITFIILTILKFIANIFHTSNQENRLKSVLRKIKEEFEKTKGSMVCDVCKYECETYKELKAHGVSCPQSQCPYCFTHCEPTEAAFQAHYKVCQVTHRFRDDLKKTVTPQNFTPGCYRTLNLFRYKSRCYIFTMWIFLLVLESILWAASASETPLTPVWNDNAHGVGSVPMHTDLELDFSLTSSSKYTYRRKLTNPLEEAQSIDLHIEIEEQTIGVDVHALGHWFDGRLNLKTSFHCYGACTKYEYPWHTAKCHYERDYQYETSWGCNPSDCPGVGTGCTACGLYLDRLKPVGSAYKIITIRYSRRVCVQFGEENLCKIIDMNDCFVSRHVKVCIIGTVSKFSQGDTLLFFGPLEGGGLIFKHWCTSTCQFGDPGDIMSPRDKGFLCPEFPGSFRKKCNFATTPICEYDGNMVSGYKKVMATIDSFQSFNTSTMHFTDERIEWKDPDGMLRDHINILVTKDIDFDNLGENPCKIGLQTSSIEGAWGSGVGFTLTCLVSLTECPTFLTSIKACDKAICYGAESVTLTRGQNTVKVSGKGGHSGSTFKCCHGEDCSQIGLHAAAPHLDKVNGISEMENSKEYDDGAPQCGIKCWFVKSGEWISGIFSGNWIVLIVLCVFLLFSLVLLSILCPVRKHKKS.

The N-terminal stretch at 1-18 (MGIWKWLVMASLVWPVLT) is a signal peptide. Residues 19–485 (LRNVYDMKIE…VPGFHGWATA (467 aa)) are Lumenal-facing. Cystine bridges form between Cys29–Cys151, Cys63–Cys157, Cys109–Cys128, Cys133–Cys138, Cys175–Cys185, Cys210–Cys247, Cys234–Cys351, Cys376–Cys435, Cys380–Cys389, Cys405–Cys424, and Cys452–Cys475. Residue Asn134 is glycosylated (N-linked (GlcNAc...) asparagine; by host). Asn235 and Asn347 each carry an N-linked (GlcNAc...) asparagine; by host glycan. Residue Asn399 is glycosylated (N-linked (GlcNAc...) asparagine; by host). Residues 486 to 506 (ALLVTFCFGWVLIPAITFIIL) form a helical membrane-spanning segment. The Cytoplasmic segment spans residues 507-627 (TILKFIANIF…LNLFRYKSRC (121 aa)). The binding to the ribonucleoprotein stretch occupies residues 516-533 (FHTSNQENRLKSVLRKIK). 2 CCHC-type zinc fingers span residues 545–565 (CDVCKYECETYKELKAHGVSC) and 570–591 (CPYCFTHCEPTEAAFQAHYKVC). Binding to the ribonucleoprotein regions lie at residues 588 to 605 (YKVCQVTHRFRDDLKKTV), 592 to 603 (QVTHRFRDDLKK), and 611 to 625 (TPGCYRTLNLFRYKS). An ITAM domain is found at 611 to 634 (TPGCYRTLNLFRYKSRCYIFTMWI). Positions 615 to 618 (YRTL) match the YxxL motif. Residues 628–648 (YIFTMWIFLLVLESILWAASA) traverse the membrane as a helical segment. The Lumenal portion of the chain corresponds to 649–1105 (SETPLTPVWN…EWISGIFSGN (457 aa)). Disulfide bonds link Cys735–Cys770, Cys739–Cys777, Cys751–Cys885, Cys765–Cys896, Cys780–Cys904, Cys806–Cys815, Cys823–Cys832, and Cys863–Cys867. The interval 757 to 777 (YQYETSWGCNPSDCPGVGTGC) is fusion loop. N-linked (GlcNAc...) asparagine; by host glycosylation occurs at Asn928. Cystine bridges form between Cys970–Cys1000, Cys993–Cys1045, Cys1010–Cys1015, Cys1046–Cys1051, and Cys1085–Cys1089. Residues 1106–1126 (WIVLIVLCVFLLFSLVLLSIL) traverse the membrane as a helical segment. Residues 1122 to 1135 (LLSILCPVRKHKKS) form a binding to the ribonucleoprotein region. Residues 1127-1135 (CPVRKHKKS) lie on the Cytoplasmic side of the membrane.

Belongs to the hantavirus envelope glycoprotein family. As to quaternary structure, homodimer. Homotetramer; forms heterotetrameric Gn-Gc spikes in the pre-fusion conformation. Interacts (via C-terminus) with the nucleoprotein. Interacts with host TUFM; this interaction contributes to the virus-induced degradation of mitochondria by autophagy, which leads to degradation of host MAVS and inhibition of type I interferon (IFN) responses. Interacts with host MAP1LC3B; this interaction contributes to the virus-induced degradation of mitochondria by autophagy, which leads to degradation of host MAVS and inhibition of type I interferon (IFN) responses. Homodimer. Homotetramer; forms heterotetrameric Gn-Gc spikes in the pre-fusion conformation. Homotrimer; forms homotrimer in the post-fusion conformation at acidic pH. Interacts (via C-terminus) with the nucleoprotein. In terms of processing, envelope polyprotein precursor is quickly cleaved in vivo just after synthesis, presumably by host signal peptidase.

The protein resides in the virion membrane. Its subcellular location is the host cell surface. The protein localises to the host Golgi apparatus membrane. It is found in the host endoplasmic reticulum membrane. It localises to the host mitochondrion. Functionally, forms homotetramers with glycoprotein C at the surface of the virion. Attaches the virion to host cell receptors including integrin ITGAV/ITGB3. This attachment induces virion internalization predominantly through clathrin-dependent endocytosis. May also bind to host C1QBP for virus entry into the host cell. Mediates the assembly and budding of infectious virus particles through its interaction with the nucleocapsid protein and the viral genome. May dysregulate normal immune and endothelial cell responses through an ITAM motif. Translocates to mitochondria, binds to host TUFM and recruits MAP1LC3B. These interactions induce mitochondrial autophagy and therefore destruction of host MAVS leading to inhibition of type I interferon (IFN) responses. Concomitant breakdown of glycoprotein N is apparently prevented by the nucleoprotein that may inhibit Gn-stimulated autophagosome-lysosome fusion. Interacts with the viral genomic RNA. In terms of biological role, forms homotetramers with glycoprotein N at the surface of the virion. Attaches the virion to host cell receptors including integrin ITGAV/ITGB3. This attachment induces virion internalization predominantly through clathrin-dependent endocytosis. May also bind to host C1QBP for virus entry into the host cell. Class II fusion protein that promotes fusion of viral membrane with host endosomal membrane after endocytosis of the virion. This chain is Envelopment polyprotein (GP), found in Hantaan virus (strain Lee) (Lee virus).